The sequence spans 133 residues: Small ribosomal subunit protein uS11 (133 aa).

It belongs to the universal ribosomal protein uS11 family. Part of the 30S ribosomal subunit. Interacts with proteins S7 and S18. Binds to IF-3.

Located on the platform of the 30S subunit, it bridges several disparate RNA helices of the 16S rRNA. Forms part of the Shine-Dalgarno cleft in the 70S ribosome. The chain is Small ribosomal subunit protein uS11 from Chlamydia pneumoniae (Chlamydophila pneumoniae).